A 255-amino-acid chain; its full sequence is Small ribosomal subunit protein uS2 (255 aa).

The tract at residues 230–255 is disordered; that stretch reads QGSSGRDLGASSEVPVEPALEEAAEG.

The protein belongs to the universal ribosomal protein uS2 family.

This Rhizobium johnstonii (strain DSM 114642 / LMG 32736 / 3841) (Rhizobium leguminosarum bv. viciae) protein is Small ribosomal subunit protein uS2.